Reading from the N-terminus, the 148-residue chain is Large ribosomal subunit protein bL9 (148 aa).

Belongs to the bacterial ribosomal protein bL9 family.

Its function is as follows. Binds to the 23S rRNA. The chain is Large ribosomal subunit protein bL9 from Listeria monocytogenes serotype 4b (strain CLIP80459).